We begin with the raw amino-acid sequence, 464 residues long: F-box/WD repeat-containing protein 12 (464 aa).

An F-box domain is found at 1 to 45; it reads MEIRLPDLALKRIFSFLDLFGLLQVSQVNKHWNRIADSDYLWRSL. WD repeat units lie at residues 89 to 132, 136 to 174, 178 to 217, 222 to 263, 270 to 315, 320 to 367, 370 to 407, and 416 to 461; these read YKVT…CAWD, GTMI…KVWN, RDAL…YTFT, RDVS…FLTE, EGSV…ITFD, KTGG…LLFS, GFLL…YMWE, and RSCC…VMYS.

As to quaternary structure, interacts with SKP1. Interacts with CUL1. Interacts with IL22RA1. As to expression, ubiquitously expressed.

Its pathway is protein modification; protein ubiquitination. In terms of biological role, substrate-recognition component of the SCF (SKP1-CUL1-F-box protein)-type E3 ubiquitin ligase complex. Promotes degradation of interleukin-22 receptor subunit IL22RA1 in resting and IL22-stimulated conditions by facilitating its ubiquitination. Functions as a cell growth suppressor. In Homo sapiens (Human), this protein is F-box/WD repeat-containing protein 12 (FBXW12).